Reading from the N-terminus, the 76-residue chain is Protein CASC2, isoforms 1/2 (76 aa).

The disordered stretch occupies residues 1 to 20 (MAGTRGLMLLGPGPVAGPRD).

This Homo sapiens (Human) protein is Protein CASC2, isoforms 1/2 (CASC2).